Reading from the N-terminus, the 246-residue chain is tRNA (guanine-N(7)-)-methyltransferase (246 aa).

S-adenosyl-L-methionine-binding residues include E76, E101, D128, and D151. D151 is an active-site residue. Residue K155 participates in substrate binding. The interaction with RNA stretch occupies residues R157–R162. Substrate contacts are provided by residues D187 and T222–E225.

Belongs to the class I-like SAM-binding methyltransferase superfamily. TrmB family.

The enzyme catalyses guanosine(46) in tRNA + S-adenosyl-L-methionine = N(7)-methylguanosine(46) in tRNA + S-adenosyl-L-homocysteine. The protein operates within tRNA modification; N(7)-methylguanine-tRNA biosynthesis. Its function is as follows. Catalyzes the formation of N(7)-methylguanine at position 46 (m7G46) in tRNA. The chain is tRNA (guanine-N(7)-)-methyltransferase from Dechloromonas aromatica (strain RCB).